Here is a 156-residue protein sequence, read N- to C-terminus: Large ribosomal subunit protein eL29 (156 aa).

Basic residues predominate over residues 1–26; the sequence is MAKSKNHTTHNQSRKWHRNGIKKPRS. Disordered regions lie at residues 1-35 and 116-156; these read MAKSKNHTTHNQSRKWHRNGIKKPRSQRYESLKGV and RRLC…VKAP. N6-methyllysine is present on K5. Residue S31 is modified to Phosphoserine. K33 is subject to N6-acetyllysine. 2 repeat units span residues 129-136 and 137-144. The interval 129–144 is 2 X 8 AA tandem repeats of A-X-A-K-A-P-A-[KQ]; sequence AEAKAPAKAQAKAPAQ. Residues 134–156 are compositionally biased toward low complexity; it reads PAKAQAKAPAQAPKGAQAPVKAP.

Belongs to the eukaryotic ribosomal protein eL29 family. In terms of assembly, component of the large ribosomal subunit.

It localises to the cytoplasm. Its function is as follows. Component of the large ribosomal subunit. The ribosome is a large ribonucleoprotein complex responsible for the synthesis of proteins in the cell. This Rattus norvegicus (Rat) protein is Large ribosomal subunit protein eL29 (Rpl29).